Reading from the N-terminus, the 78-residue chain is Exodeoxyribonuclease 7 small subunit (78 aa).

It belongs to the XseB family. Heterooligomer composed of large and small subunits.

It localises to the cytoplasm. It carries out the reaction Exonucleolytic cleavage in either 5'- to 3'- or 3'- to 5'-direction to yield nucleoside 5'-phosphates.. In terms of biological role, bidirectionally degrades single-stranded DNA into large acid-insoluble oligonucleotides, which are then degraded further into small acid-soluble oligonucleotides. The polypeptide is Exodeoxyribonuclease 7 small subunit (Nocardia farcinica (strain IFM 10152)).